A 285-amino-acid polypeptide reads, in one-letter code: NAD kinase (285 aa).

The active-site Proton acceptor is the Asp-76. Residues 76 to 77, 151 to 152, His-162, Arg-179, Asp-181, 192 to 197, and Gln-252 each bind NAD(+); these read DG, NE, and TAYSLS.

This sequence belongs to the NAD kinase family. A divalent metal cation serves as cofactor.

It is found in the cytoplasm. The catalysed reaction is NAD(+) + ATP = ADP + NADP(+) + H(+). In terms of biological role, involved in the regulation of the intracellular balance of NAD and NADP, and is a key enzyme in the biosynthesis of NADP. Catalyzes specifically the phosphorylation on 2'-hydroxyl of the adenosine moiety of NAD to yield NADP. This is NAD kinase from Haemophilus influenzae (strain ATCC 51907 / DSM 11121 / KW20 / Rd).